The primary structure comprises 76 residues: uncharacterized protein (76 aa).

The helical transmembrane segment at 40–60 threads the bilayer; the sequence is IVLNLVVLVGVVPLTWMFLGQ.

It is found in the membrane. This is an uncharacterized protein from Dictyostelium discoideum (Social amoeba).